The chain runs to 579 residues: 6-deoxy-6-sulfo-D-gluconate dehydratase (579 aa).

[4Fe-4S] cluster is bound by residues C59, C127, and C200.

This sequence belongs to the IlvD/Edd family. Homodimer. Requires [4Fe-4S] cluster as cofactor.

The enzyme catalyses 6-deoxy-6-sulfo-D-gluconate = 2-dehydro-3,6-dideoxy-6-sulfo-D-gluconate + H2O. Catalyzes the dehydration of 6-deoxy-6-sulfo-D-gluconate to 2-dehydro-3,6-dideoxy-6-sulfo-D-gluconate. Is involved in a degradation pathway of sulfoquinovose (SQ) that allows P.putida SQ1 to use SQ as the sole carbon and energy source for growth. The protein is 6-deoxy-6-sulfo-D-gluconate dehydratase of Pseudomonas putida (Arthrobacter siderocapsulatus).